The sequence spans 250 residues: Probable transcriptional regulatory protein Paes_0496 (250 aa).

The protein belongs to the TACO1 family.

It localises to the cytoplasm. This Prosthecochloris aestuarii (strain DSM 271 / SK 413) protein is Probable transcriptional regulatory protein Paes_0496.